We begin with the raw amino-acid sequence, 983 residues long: Ephrin type-A receptor 3 (983 aa).

Residues 1–20 (MDCHLSILVLLGCCVLSCSG) form the signal peptide. The Extracellular portion of the chain corresponds to 21 to 540 (ELSPQPSNEV…SFSISGENSH (520 aa)). The Eph LBD domain occupies 29–206 (EVNLLDSKTI…YFKKCPFTVK (178 aa)). N-linked (GlcNAc...) asparagine glycans are attached at residues N231, N336, N390, N403, and N492. Fibronectin type-III domains follow at residues 324-434 (PPSA…TNQA) and 435-530 (APSP…TSPD). Residues 541–564 (VVMIAISAAVAIIVLTVVTYVLVG) form a helical membrane-spanning segment. The Cytoplasmic portion of the chain corresponds to 565–983 (RFCGYHKSKH…TQSKNGPVPV (419 aa)). Y596 and Y602 each carry phosphotyrosine; by autocatalysis. Positions 621–882 (ISIDKVVGAG…QIVSILDKLI (262 aa)) constitute a Protein kinase domain. Residues 628–633 (GAGEFG), K653, and 700–706 (EYMENGS) each bind ATP. The residue at position 701 (Y701) is a Phosphotyrosine; by autocatalysis. D746 (proton acceptor) is an active-site residue. 750–751 (RN) is an ATP binding site. Y779 bears the Phosphotyrosine; by autocatalysis mark. The 65-residue stretch at 911–975 (ATFHTTGDWL…ISTIKALETQ (65 aa)) folds into the SAM domain. Y937 bears the Phosphotyrosine mark. The short motif at 981–983 (VPV) is the PDZ-binding element.

This sequence belongs to the protein kinase superfamily. Tyr protein kinase family. Ephrin receptor subfamily. Heterotetramer upon binding of the ligand. The heterotetramer is composed of an ephrin dimer and a receptor dimer. Oligomerization is probably required to induce biological responses. Forms a ternary EFNA5-EPHA3-ADAM10 complex mediating EFNA5 extracellular domain shedding by ADAM10 which regulates the EFNA5-EPHA3 complex internalization and function. Interacts (phosphorylated) with PTPN1; dephosphorylates EPHA3 and may regulate its trafficking and function. Interacts (phosphorylated) with CRK; mediates EFNA5-EPHA3 signaling through RHOA GTPase activation. Interacts with NCK1 (via SH2 domain); mediates EFNA5-EPHA3 signaling. Post-translationally, autophosphorylates upon activation by EFNA5. Phosphorylation on Tyr-602 mediates interaction with NCK1. Dephosphorylated by PTPN1. As to expression, greatest levels of expression occurring in the brain, also detected in testis. Expressed in myogenic progenitor cells.

The protein localises to the cell membrane. It is found in the secreted. It carries out the reaction L-tyrosyl-[protein] + ATP = O-phospho-L-tyrosyl-[protein] + ADP + H(+). Its function is as follows. Receptor tyrosine kinase which binds promiscuously membrane-bound ephrin family ligands residing on adjacent cells, leading to contact-dependent bidirectional signaling into neighboring cells. The signaling pathway downstream of the receptor is referred to as forward signaling while the signaling pathway downstream of the ephrin ligand is referred to as reverse signaling. Highly promiscuous for ephrin-A ligands it binds preferentially EFNA5. Upon activation by EFNA5 regulates cell-cell adhesion, cytoskeletal organization and cell migration. Plays a role in cardiac cells migration and differentiation and regulates the formation of the atrioventricular canal and septum during development probably through activation by EFNA1. Involved in the retinotectal mapping of neurons. May also control the segregation but not the guidance of motor and sensory axons during neuromuscular circuit development. The polypeptide is Ephrin type-A receptor 3 (Epha3) (Mus musculus (Mouse)).